The chain runs to 288 residues: 4-diphosphocytidyl-2-C-methyl-D-erythritol kinase (288 aa).

K8 is an active-site residue. Residue 90-100 (PVGAGLAGGSS) coordinates ATP. The active site involves D132.

The protein belongs to the GHMP kinase family. IspE subfamily.

The catalysed reaction is 4-CDP-2-C-methyl-D-erythritol + ATP = 4-CDP-2-C-methyl-D-erythritol 2-phosphate + ADP + H(+). It participates in isoprenoid biosynthesis; isopentenyl diphosphate biosynthesis via DXP pathway; isopentenyl diphosphate from 1-deoxy-D-xylulose 5-phosphate: step 3/6. Catalyzes the phosphorylation of the position 2 hydroxy group of 4-diphosphocytidyl-2C-methyl-D-erythritol. The polypeptide is 4-diphosphocytidyl-2-C-methyl-D-erythritol kinase (Chlamydia trachomatis serovar A (strain ATCC VR-571B / DSM 19440 / HAR-13)).